We begin with the raw amino-acid sequence, 146 residues long: Anti-sigma F factor (146 aa).

Belongs to the anti-sigma-factor family.

It carries out the reaction L-seryl-[protein] + ATP = O-phospho-L-seryl-[protein] + ADP + H(+). The catalysed reaction is L-threonyl-[protein] + ATP = O-phospho-L-threonyl-[protein] + ADP + H(+). Its function is as follows. Binds to sigma F and blocks its ability to form an RNA polymerase holoenzyme (E-sigma F). Phosphorylates SpoIIAA on a serine residue. This phosphorylation may enable SpoIIAA to act as an anti-anti-sigma factor that counteracts SpoIIAB and thus releases sigma F from inhibition. The sequence is that of Anti-sigma F factor from Geobacillus sp. (strain WCH70).